Consider the following 574-residue polypeptide: Aspartate--tRNA ligase (574 aa).

Glu172 lines the L-aspartate pocket. The tract at residues 196-199 is aspartate; the sequence is QIFK. Arg218 serves as a coordination point for L-aspartate. Residues 218–220 and Gln227 each bind ATP; that span reads RDE. An L-aspartate-binding site is contributed by His453. Residue Glu487 coordinates ATP. An L-aspartate-binding site is contributed by Arg494. 539–542 serves as a coordination point for ATP; sequence GLDR.

This sequence belongs to the class-II aminoacyl-tRNA synthetase family. Type 1 subfamily. Homodimer.

The protein localises to the cytoplasm. It catalyses the reaction tRNA(Asp) + L-aspartate + ATP = L-aspartyl-tRNA(Asp) + AMP + diphosphate. Its function is as follows. Catalyzes the attachment of L-aspartate to tRNA(Asp) in a two-step reaction: L-aspartate is first activated by ATP to form Asp-AMP and then transferred to the acceptor end of tRNA(Asp). The sequence is that of Aspartate--tRNA ligase from Blochmanniella pennsylvanica (strain BPEN).